The chain runs to 200 residues: Recombination protein RecR (200 aa).

The C4-type zinc finger occupies 58-75 (CPTCFCLKSHPESVCSFC). One can recognise a Toprim domain in the interval 82–177 (SILCIVATPK…SVSRLALGLP (96 aa)).

This sequence belongs to the RecR family.

In terms of biological role, may play a role in DNA repair. It seems to be involved in an RecBC-independent recombinational process of DNA repair. It may act with RecF and RecO. The chain is Recombination protein RecR from Chlamydia abortus (strain DSM 27085 / S26/3) (Chlamydophila abortus).